A 129-amino-acid chain; its full sequence is NADH-quinone oxidoreductase subunit A (129 aa).

Transmembrane regions (helical) follow at residues 14 to 34, 67 to 87, and 95 to 115; these read LAIH…VAAW, FLIA…FAWA, and WLGL…LVYL.

It belongs to the complex I subunit 3 family. In terms of assembly, NDH-1 is composed of 14 different subunits. Subunits NuoA, H, J, K, L, M, N constitute the membrane sector of the complex.

It localises to the cell inner membrane. The catalysed reaction is a quinone + NADH + 5 H(+)(in) = a quinol + NAD(+) + 4 H(+)(out). In terms of biological role, NDH-1 shuttles electrons from NADH, via FMN and iron-sulfur (Fe-S) centers, to quinones in the respiratory chain. The immediate electron acceptor for the enzyme in this species is believed to be ubiquinone. Couples the redox reaction to proton translocation (for every two electrons transferred, four hydrogen ions are translocated across the cytoplasmic membrane), and thus conserves the redox energy in a proton gradient. This Rhodopseudomonas palustris (strain ATCC BAA-98 / CGA009) protein is NADH-quinone oxidoreductase subunit A.